The sequence spans 772 residues: Cadherin-19 (772 aa).

Positions 1–21 (MNCYLLLRFMLGIPLLWPCLG) are cleaved as a signal peptide. Residues 22–43 (ATENSQTKKVKQPVRSHLRVKR) constitute a propeptide that is removed on maturation. 5 Cadherin domains span residues 44-148 (GWVW…EPKF), 149-256 (LDEP…KPIF), 257-370 (KESL…PPLF), 371-470 (LLPY…APEF), and 470-581 (FSQY…STQT). At 44–596 (GWVWNQFFVP…LVLSMGFKTE (553 aa)) the chain is on the extracellular side. 2 N-linked (GlcNAc...) asparagine glycosylation sites follow: Asn-57 and Asn-74. Asn-419, Asn-437, Asn-508, Asn-515, Asn-516, and Asn-534 each carry an N-linked (GlcNAc...) asparagine glycan. The chain crosses the membrane as a helical span at residues 597 to 617 (VIIAILICIMIIFGFIFLTLG). Residues 618–772 (LKQRRKQILF…MFGSAVQSNN (155 aa)) are Cytoplasmic-facing.

Expressed in many tissues, with the exception of uterus.

It is found in the cell membrane. Its function is as follows. Cadherins are calcium-dependent cell adhesion proteins. They preferentially interact with themselves in a homophilic manner in connecting cells; cadherins may thus contribute to the sorting of heterogeneous cell types. This chain is Cadherin-19 (CDH19), found in Homo sapiens (Human).